We begin with the raw amino-acid sequence, 548 residues long: Membrane protein insertase YidC (548 aa).

A helical transmembrane segment spans residues 6-26 (NLLVIALLFVSFMIWQAWEQD). The interval 28-55 (NPQPQAQQTTQTTTTAAGSAADQGVPAS) is disordered. The segment covering 30 to 50 (QPQAQQTTQTTTTAAGSAADQ) has biased composition (low complexity). Transmembrane regions (helical) follow at residues 350 to 370 (FVGN…GIMY), 420 to 440 (LGGC…YYML), 458 to 478 (LSAQ…MFFI), and 499 to 519 (PVIF…YYIV).

This sequence belongs to the OXA1/ALB3/YidC family. Type 1 subfamily. Interacts with the Sec translocase complex via SecD. Specifically interacts with transmembrane segments of nascent integral membrane proteins during membrane integration.

The protein resides in the cell inner membrane. Functionally, required for the insertion and/or proper folding and/or complex formation of integral membrane proteins into the membrane. Involved in integration of membrane proteins that insert both dependently and independently of the Sec translocase complex, as well as at least some lipoproteins. Aids folding of multispanning membrane proteins. The sequence is that of Membrane protein insertase YidC from Escherichia coli O127:H6 (strain E2348/69 / EPEC).